The following is a 395-amino-acid chain: MRAVRLHAKWDPRPEFKLGPKDIEGKLTWLGSKVWRYPEVRVEEVPEPRIEKPTEIIIKVKACGICGSDVHMAQTDEEGYILYPGLTGFPVTLGHEFSGVVVEAGPEAINRRTNKRFEIGEPVCAEEMLWCGHCRPCAEGFPNHCENLNELGFNVDGAFAEYVKVDAKYAWSLRELEGVYEGDRLFLAGSLVEPTSVAYNAVIVRGGGIRPGDNVVILGGGPIGLAAVAILKHAGASKVILSEPSEVRRNLAKELGADHVIDPTKENFVEAVLDYTNGLGAKLFLEATGVPQLVWPQIEEVIWRARGINATVAIVARADAKIPLTGEVFQVRRAQIVGSQGHSGHGTFPRVISLMASGMDMTKIISKTVSMEEIPEYIKRLQTDKSLVKVTMLNE.

Cys66 contributes to the Zn(2+) binding site. Residues Ser68 and His71 each act as charge relay system in the active site. Zn(2+) contacts are provided by His95, Glu96, Cys131, Cys134, Cys137, Cys145, and Glu193. The NAD(+) site is built by Ile223, Glu243, and Arg248.

Belongs to the zinc-containing alcohol dehydrogenase family. In terms of assembly, homodimer. Zn(2+) is required as a cofactor.

It catalyses the reaction scyllo-inosose + NAD(+) = 3-dehydro-scyllo-inosose + NADH + H(+). Its pathway is polyol metabolism; myo-inositol metabolism. Functionally, catalyzes the NAD(+)-dependent oxidation of scyllo-inosose (2-keto-myo-inositol) to 3-dehydro-scyllo-inosose (diketo-inositol), and thus probably functions in a myo-inositol degradation pathway together with IolG, IolN and IolO. Has no activity on myo-inositol, D-chiro-inositol and 1-keto-D-chiro-inositol. This is Scyllo-inosose 3-dehydrogenase from Thermotoga maritima (strain ATCC 43589 / DSM 3109 / JCM 10099 / NBRC 100826 / MSB8).